We begin with the raw amino-acid sequence, 518 residues long: Tropomyosin-1, isoforms 33/34 (518 aa).

A coiled-coil region spans residues 14–267 (DKDGALERAL…DDLIVEKERY (254 aa)). 2 disordered regions span residues 101-125 (RSEERLGSATAKLSEASQAADESER) and 288-518 (FWNP…APPA). Residues 293 to 305 (NPKPPTPKLPTPT) are compositionally biased toward pro residues. Residues 318–348 (AAEAAAAAEAEAAEAAAAAGEAGPDGAPAAP) show a composition bias toward low complexity. Pro residues-rich tracts occupy residues 357–374 (EPTPPKEPTPPPPPPPPF) and 394–405 (EPPPPGSEPEPV). Over residues 406-518 (PAAEGEAAPA…AAAEGEAPPA (113 aa)) the composition is skewed to low complexity.

Belongs to the tropomyosin family. In terms of assembly, homodimer. As to expression, both isoforms are only expressed in indirect flight muscles.

The protein localises to the cytoplasm. It is found in the cytoskeleton. Tropomyosin, in association with the troponin complex, plays a central role in the calcium dependent regulation of muscle contraction. This chain is Tropomyosin-1, isoforms 33/34 (Tm1), found in Drosophila melanogaster (Fruit fly).